The primary structure comprises 350 residues: Ferredoxin--NADP reductase (350 aa).

Residues Thr-25, Glu-44, Gln-52, Tyr-57, Val-97, Phe-132, Asp-298, and Ser-339 each coordinate FAD.

It belongs to the ferredoxin--NADP reductase type 2 family. As to quaternary structure, homodimer. FAD serves as cofactor.

The enzyme catalyses 2 reduced [2Fe-2S]-[ferredoxin] + NADP(+) + H(+) = 2 oxidized [2Fe-2S]-[ferredoxin] + NADPH. In Chlorobium limicola (strain DSM 245 / NBRC 103803 / 6330), this protein is Ferredoxin--NADP reductase.